Consider the following 351-residue polypeptide: N(4)-bis(aminopropyl)spermidine synthase (351 aa).

Belongs to the branched-chain polyamine synthase family.

It localises to the cytoplasm. The enzyme catalyses 2 S-adenosyl 3-(methylsulfanyl)propylamine + spermidine = N(4)-bis(aminopropyl)spermidine + 2 S-methyl-5'-thioadenosine + 2 H(+). Its pathway is amine and polyamine biosynthesis. Involved in the biosynthesis of branched-chain polyamines, which support the growth of thermophiles under high-temperature conditions. Catalyzes the sequential condensation of spermidine with the aminopropyl groups of decarboxylated S-adenosylmethionines to produce N(4)-bis(aminopropyl)spermidine via N(4)-aminopropylspermidine. Can also use spermine to produce N(4)-aminopropylspermine. The polypeptide is N(4)-bis(aminopropyl)spermidine synthase (Thermococcus kodakarensis (strain ATCC BAA-918 / JCM 12380 / KOD1) (Pyrococcus kodakaraensis (strain KOD1))).